A 79-amino-acid polypeptide reads, in one-letter code: Conotoxin Tr6.3 (79 aa).

The N-terminal stretch at 1 to 22 is a signal peptide; it reads MKLTCVLIISVLFLTASQLITA. Residues 23–47 constitute a propeptide that is removed on maturation; the sequence is VYSRDKQQYRAARLRDEMRNLKGAR. 3 disulfides stabilise this stretch: cysteine 49-cysteine 62, cysteine 56-cysteine 67, and cysteine 61-cysteine 77. A 4-hydroxyproline mark is found at proline 60 and proline 63.

It belongs to the conotoxin O1 superfamily. In terms of tissue distribution, expressed by the venom duct.

It localises to the secreted. Its function is as follows. Ion channel inhibitor that inhibits the increase in intracellular calcium upon depolarization in DRG neurons. In vivo, both intraperitoneal and intracranial injections into mice induce hyperactivity. This Conus terebra (Sea snail) protein is Conotoxin Tr6.3.